Consider the following 429-residue polypeptide: Glutamyl-tRNA reductase (429 aa).

Residues Thr56–Arg59, Ser119, Glu124–Gln126, and Gln130 each bind substrate. Residue Cys57 is the Nucleophile of the active site. Gly199–Ile204 provides a ligand contact to NADP(+).

The protein belongs to the glutamyl-tRNA reductase family. As to quaternary structure, homodimer.

The catalysed reaction is (S)-4-amino-5-oxopentanoate + tRNA(Glu) + NADP(+) = L-glutamyl-tRNA(Glu) + NADPH + H(+). The protein operates within porphyrin-containing compound metabolism; protoporphyrin-IX biosynthesis; 5-aminolevulinate from L-glutamyl-tRNA(Glu): step 1/2. Catalyzes the NADPH-dependent reduction of glutamyl-tRNA(Glu) to glutamate 1-semialdehyde (GSA). The polypeptide is Glutamyl-tRNA reductase (Janthinobacterium sp. (strain Marseille) (Minibacterium massiliensis)).